Consider the following 413-residue polypeptide: NADH-quinone oxidoreductase subunit D (413 aa).

Belongs to the complex I 49 kDa subunit family. In terms of assembly, NDH-1 is composed of 14 different subunits. Subunits NuoB, C, D, E, F, and G constitute the peripheral sector of the complex.

It is found in the cell inner membrane. It carries out the reaction a quinone + NADH + 5 H(+)(in) = a quinol + NAD(+) + 4 H(+)(out). NDH-1 shuttles electrons from NADH, via FMN and iron-sulfur (Fe-S) centers, to quinones in the respiratory chain. The immediate electron acceptor for the enzyme in this species is believed to be ubiquinone. Couples the redox reaction to proton translocation (for every two electrons transferred, four hydrogen ions are translocated across the cytoplasmic membrane), and thus conserves the redox energy in a proton gradient. This chain is NADH-quinone oxidoreductase subunit D, found in Rhodobacter capsulatus (Rhodopseudomonas capsulata).